The following is a 167-amino-acid chain: Small ribosomal subunit protein uS5 (167 aa).

The 64-residue stretch at Leu-12–Ile-75 folds into the S5 DRBM domain.

Belongs to the universal ribosomal protein uS5 family. In terms of assembly, part of the 30S ribosomal subunit. Contacts proteins S4 and S8.

In terms of biological role, with S4 and S12 plays an important role in translational accuracy. Functionally, located at the back of the 30S subunit body where it stabilizes the conformation of the head with respect to the body. The sequence is that of Small ribosomal subunit protein uS5 from Buchnera aphidicola subsp. Schizaphis graminum (strain Sg).